Here is a 258-residue protein sequence, read N- to C-terminus: Acyl-[acyl-carrier-protein]--UDP-N-acetylglucosamine O-acyltransferase (258 aa).

It belongs to the transferase hexapeptide repeat family. LpxA subfamily. Homotrimer.

It is found in the cytoplasm. The catalysed reaction is a (3R)-hydroxyacyl-[ACP] + UDP-N-acetyl-alpha-D-glucosamine = a UDP-3-O-[(3R)-3-hydroxyacyl]-N-acetyl-alpha-D-glucosamine + holo-[ACP]. Its pathway is glycolipid biosynthesis; lipid IV(A) biosynthesis; lipid IV(A) from (3R)-3-hydroxytetradecanoyl-[acyl-carrier-protein] and UDP-N-acetyl-alpha-D-glucosamine: step 1/6. Involved in the biosynthesis of lipid A, a phosphorylated glycolipid that anchors the lipopolysaccharide to the outer membrane of the cell. This is Acyl-[acyl-carrier-protein]--UDP-N-acetylglucosamine O-acyltransferase from Ectopseudomonas mendocina (strain ymp) (Pseudomonas mendocina).